The chain runs to 72 residues: Conotoxin Vc6.16 (72 aa).

An N-terminal signal peptide occupies residues 1-19 (MQKLIILLLVAAVLMSTQA). Positions 20–44 (LFQEKRPKEKIDLLSKRKTDAEKQQ) are excised as a propeptide. Disulfide bonds link C48–C62, C55–C66, and C61–C71.

Belongs to the conotoxin O2 superfamily. Expressed by the venom duct.

Its subcellular location is the secreted. Functionally, inhibits voltage-gated ion channels. The chain is Conotoxin Vc6.16 from Conus victoriae (Queen Victoria cone).